Consider the following 363-residue polypeptide: Neutral protease 2 homolog NFIA_102630 (363 aa).

The N-terminal stretch at 1–19 is a signal peptide; that stretch reads MKVTVLASAILALINGALA. Residues 20 to 172 constitute a propeptide that is removed on maturation; it reads LPANAPTLDV…PQAIKLLDRR (153 aa). Intrachain disulfides connect Cys-178–Cys-250 and Cys-257–Cys-275. Residue His-300 participates in Zn(2+) binding. The active site involves Glu-301. The Zn(2+) site is built by His-304 and Asp-315.

The protein belongs to the peptidase M35 family. Zn(2+) is required as a cofactor.

It is found in the secreted. It carries out the reaction Preferential cleavage of bonds with hydrophobic residues in P1'. Also 3-Asn-|-Gln-4 and 8-Gly-|-Ser-9 bonds in insulin B chain.. Functionally, secreted metalloproteinase that allows assimilation of proteinaceous substrates. Shows high activities on basic nuclear substrates such as histone and protamine. This Neosartorya fischeri (strain ATCC 1020 / DSM 3700 / CBS 544.65 / FGSC A1164 / JCM 1740 / NRRL 181 / WB 181) (Aspergillus fischerianus) protein is Neutral protease 2 homolog NFIA_102630.